Reading from the N-terminus, the 992-residue chain is Epstein-Barr nuclear antigen 6 (992 aa).

A disordered region spans residues 1 to 70 (MESFEGQGDS…SRGDENRGWM (70 aa)). Basic and acidic residues predominate over residues 12-31 (QSPDNERGDNVQTTGEHDQD). An interaction with host PIM1 region spans residues 130–159 (LILDSGLDTQHILCFVMAARQRLQDIRRGP). Disordered stretches follow at residues 355–905 (ATGG…DSMA), 931–954 (PLDI…PARC), and 967–992 (DNSE…SELD). The segment covering 381-391 (VELESSDDELP) has biased composition (acidic residues). Positions 445-461 (AQSTPERPGPSEQSSVT) are enriched in polar residues. Residues 479–495 (QPPPVPKPVPVKPTPPP) are compositionally biased toward pro residues. Residues 506-520 (YDDDVIEVIDVETTE) are compositionally biased toward acidic residues. A 1-1; approximate repeat occupies 551-555 (PPTVS). The 12 X 5 AA approximate tandem repeats of P-P-A-A-G stretch occupies residues 551-610 (PPTVSPSDTGPPAVGPPAAGPPAAGPPAAGPPAAGPPAAGPPAAGPRILAPLSAGPPAAG). Residues 556–560 (PSDTG) form a 2-1; approximate repeat. Residues 561-565 (PPAVG) form a 3-1; approximate repeat. Positions 563–594 (AVGPPAAGPPAAGPPAAGPPAAGPPAAGPPAA) are enriched in pro residues. 6 consecutive repeat copies span residues 566 to 570 (PPAAG), 571 to 575 (PPAAG), 576 to 580 (PPAAG), 581 to 585 (PPAAG), 586 to 590 (PPAAG), and 591 to 595 (PPAAG). Residues 595–611 (GPRILAPLSAGPPAAGP) show a composition bias toward low complexity. Residues 596–600 (PRILA) form a 10-1; approximate repeat. The 11-1; approximate repeat unit spans residues 601–605 (PLSAG). One copy of the 12-1 repeat lies at 606 to 610 (PPAAG). Polar residues-rich tracts occupy residues 659–676 (TQMQ…TQPT) and 700–714 (IESS…TQPI). Residues 715-724 (SHEEQPRYED) show a composition bias toward basic and acidic residues. Composition is skewed to low complexity over residues 738 to 764 (AAQP…QGYQ) and 772 to 781 (PYQGYQEPPA). 3 tandem repeats follow at residues 741–753 (PAPQ…YQEP), 754–766 (PAPQ…YQEP), and 767–779 (PPPQ…YQEP). The interval 741 to 779 (PAPQAPYQGYQEPPAPQAPYQGYQEPPPPQAPYQGYQEP) is 3 X 13 AA tandem repeats of P-[AP]-P-Q-A-P-Y-Q-G-Y-Q-E-P. The segment covering 845–857 (DQVSQFPHLQSET) has biased composition (polar residues). The segment covering 859 to 881 (PPRLQLSLVPLVSSSAPSWSSPQ) has biased composition (low complexity). The segment covering 882–899 (PRAPIRPIPTRFPPPPMP) has biased composition (pro residues).

Belongs to the herpesviridae EBNA-6 family. Interacts with host CTPB1; this interaction leads to gene repression, but also seems to interfere with the repressive function of CtBP pre-bound to DNA, leading to EBNA6 mediated up-regulation of many host genes. Interacts with host MYC; this interaction enhances MYC stability. Interacts (via N-terminus) with host RBPJ. Interacts (via N-terminus) with host histone H2AX; this interaction facilitates H2AX proteasomal degradation. Interacts with host TP73; this interaction inhibits TP73-mediated apoptotic pathway. Interacts (via N-terminus) with host PIM1; this interaction upregulates and stabilizes PIM1 and induces cell proliferation by inhibiting the growth suppressive properties of p21.

The protein resides in the host nucleus. Its subcellular location is the host nucleus matrix. Functionally, plays an essential role for the activation and immortalization of human B-cells. Represses transcription of viral promoters TP1 and Cp through interaction with host RBPJ, and inhibits EBNA2-mediated activation of these promoters. Targets host chromatin through interactions with host transcription factors, especially RBPJ and IRF4. Alternatively, EBNA6 also regulates the transcription of the EBV oncogene LMP1 in a cell cycle-dependent manner. Modulates the activity of several host proteins involved in cell cycle regulation including host cyclin A, MYC, RB, p21 and p27 mainly through binding to the host SCF(SKP2) complex. Inhibits the promoter of host H2AX and targets H2AX to proteasomal degradation in order to promote latency and cell proliferation. Upregulates host PIM1 expression and stabilization. Potentiates PIM1 to promote cell proliferation by inhibiting the growth suppressive properties of p21. The polypeptide is Epstein-Barr nuclear antigen 6 (EBNA6) (Epstein-Barr virus (strain B95-8) (HHV-4)).